The sequence spans 229 residues: Demethylmenaquinone methyltransferase (229 aa).

Residues T58, D78, and 100-101 (DA) contribute to the S-adenosyl-L-methionine site.

This sequence belongs to the class I-like SAM-binding methyltransferase superfamily. MenG/UbiE family.

It carries out the reaction a 2-demethylmenaquinol + S-adenosyl-L-methionine = a menaquinol + S-adenosyl-L-homocysteine + H(+). Its pathway is quinol/quinone metabolism; menaquinone biosynthesis; menaquinol from 1,4-dihydroxy-2-naphthoate: step 2/2. In terms of biological role, methyltransferase required for the conversion of demethylmenaquinol (DMKH2) to menaquinol (MKH2). The protein is Demethylmenaquinone methyltransferase of Thermotoga maritima (strain ATCC 43589 / DSM 3109 / JCM 10099 / NBRC 100826 / MSB8).